The following is a 440-amino-acid chain: Argininosuccinate lyase (440 aa).

Belongs to the lyase 1 family. Argininosuccinate lyase subfamily.

Its subcellular location is the cytoplasm. The catalysed reaction is 2-(N(omega)-L-arginino)succinate = fumarate + L-arginine. It functions in the pathway amino-acid biosynthesis; L-arginine biosynthesis; L-arginine from L-ornithine and carbamoyl phosphate: step 3/3. In Clostridium botulinum (strain Langeland / NCTC 10281 / Type F), this protein is Argininosuccinate lyase.